The following is a 797-amino-acid chain: Inactive deaminase YBR284W (797 aa).

Residues 627-647 traverse the membrane as a helical segment; sequence LVYLFYLSQIPMVVAPLNSIV.

It belongs to the metallo-dependent hydrolases superfamily. Adenosine and AMP deaminases family.

Its subcellular location is the membrane. This is Inactive deaminase YBR284W from Saccharomyces cerevisiae (strain ATCC 204508 / S288c) (Baker's yeast).